Here is a 237-residue protein sequence, read N- to C-terminus: tRNA1(Val) (adenine(37)-N6)-methyltransferase (237 aa).

It belongs to the methyltransferase superfamily. tRNA (adenine-N(6)-)-methyltransferase family.

Its subcellular location is the cytoplasm. The catalysed reaction is adenosine(37) in tRNA1(Val) + S-adenosyl-L-methionine = N(6)-methyladenosine(37) in tRNA1(Val) + S-adenosyl-L-homocysteine + H(+). In terms of biological role, specifically methylates the adenine in position 37 of tRNA(1)(Val) (anticodon cmo5UAC). This is tRNA1(Val) (adenine(37)-N6)-methyltransferase from Parabacteroides distasonis (strain ATCC 8503 / DSM 20701 / CIP 104284 / JCM 5825 / NCTC 11152).